We begin with the raw amino-acid sequence, 305 residues long: Glycine--tRNA ligase alpha subunit (305 aa).

This sequence belongs to the class-II aminoacyl-tRNA synthetase family. As to quaternary structure, tetramer of two alpha and two beta subunits.

The protein localises to the cytoplasm. It catalyses the reaction tRNA(Gly) + glycine + ATP = glycyl-tRNA(Gly) + AMP + diphosphate. This is Glycine--tRNA ligase alpha subunit from Streptococcus pneumoniae (strain 70585).